Here is a 208-residue protein sequence, read N- to C-terminus: 3-demethoxyubiquinol 3-hydroxylase (208 aa).

The Fe cation site is built by Glu-57, Glu-87, His-90, Glu-139, Glu-171, and His-174.

It belongs to the COQ7 family. Fe cation serves as cofactor.

The protein localises to the cell membrane. The catalysed reaction is a 5-methoxy-2-methyl-3-(all-trans-polyprenyl)benzene-1,4-diol + AH2 + O2 = a 3-demethylubiquinol + A + H2O. The protein operates within cofactor biosynthesis; ubiquinone biosynthesis. Its function is as follows. Catalyzes the hydroxylation of 2-nonaprenyl-3-methyl-6-methoxy-1,4-benzoquinol during ubiquinone biosynthesis. This chain is 3-demethoxyubiquinol 3-hydroxylase, found in Burkholderia cenocepacia (strain HI2424).